The chain runs to 858 residues: Phosphoenolpyruvate carboxylase (858 aa).

Active-site residues include histidine 145 and lysine 531.

It belongs to the PEPCase type 1 family. The cofactor is Mg(2+).

The catalysed reaction is oxaloacetate + phosphate = phosphoenolpyruvate + hydrogencarbonate. Its function is as follows. Forms oxaloacetate, a four-carbon dicarboxylic acid source for the tricarboxylic acid cycle. The sequence is that of Phosphoenolpyruvate carboxylase from Thermus thermophilus (strain ATCC BAA-163 / DSM 7039 / HB27).